A 600-amino-acid chain; its full sequence is Proline--tRNA ligase (600 aa).

This sequence belongs to the class-II aminoacyl-tRNA synthetase family. ProS type 1 subfamily. As to quaternary structure, homodimer.

It localises to the cytoplasm. The catalysed reaction is tRNA(Pro) + L-proline + ATP = L-prolyl-tRNA(Pro) + AMP + diphosphate. Functionally, catalyzes the attachment of proline to tRNA(Pro) in a two-step reaction: proline is first activated by ATP to form Pro-AMP and then transferred to the acceptor end of tRNA(Pro). As ProRS can inadvertently accommodate and process non-cognate amino acids such as alanine and cysteine, to avoid such errors it has two additional distinct editing activities against alanine. One activity is designated as 'pretransfer' editing and involves the tRNA(Pro)-independent hydrolysis of activated Ala-AMP. The other activity is designated 'posttransfer' editing and involves deacylation of mischarged Ala-tRNA(Pro). The misacylated Cys-tRNA(Pro) is not edited by ProRS. This chain is Proline--tRNA ligase, found in Prochlorococcus marinus (strain MIT 9211).